Reading from the N-terminus, the 193-residue chain is Sorting nexin-22 (193 aa).

A disordered region spans residues 1–21; it reads MLEVHIPSVGPEAEGPRQSPE. Positions 1–118 constitute a PX domain; that stretch reads MLEVHIPSVG…HFPTDPKASN (118 aa). Residues R43, S45, K66, and R79 each coordinate a 1,2-diacyl-sn-glycero-3-phospho-(1D-myo-inositol-3-phosphate).

It belongs to the sorting nexin family. As to quaternary structure, (Microbial infection) Interacts with P.falciparum (strain 3D7) CK1. As to expression, expressed in erythrocytes (at protein level).

Its subcellular location is the cytoplasmic vesicle membrane. May be involved in several stages of intracellular trafficking. Interacts with membranes containing phosphatidylinositol 3-phosphate (PtdIns(3P)). This Homo sapiens (Human) protein is Sorting nexin-22 (SNX22).